The primary structure comprises 241 residues: 2,3,4,5-tetrahydropyridine-2,6-dicarboxylate N-acetyltransferase (241 aa).

The protein belongs to the transferase hexapeptide repeat family. DapH subfamily.

It carries out the reaction (S)-2,3,4,5-tetrahydrodipicolinate + acetyl-CoA + H2O = L-2-acetamido-6-oxoheptanedioate + CoA. It functions in the pathway amino-acid biosynthesis; L-lysine biosynthesis via DAP pathway; LL-2,6-diaminopimelate from (S)-tetrahydrodipicolinate (acetylase route): step 1/3. Its function is as follows. Catalyzes the transfer of an acetyl group from acetyl-CoA to tetrahydrodipicolinate. This chain is 2,3,4,5-tetrahydropyridine-2,6-dicarboxylate N-acetyltransferase, found in Caldanaerobacter subterraneus subsp. tengcongensis (strain DSM 15242 / JCM 11007 / NBRC 100824 / MB4) (Thermoanaerobacter tengcongensis).